A 148-amino-acid chain; its full sequence is 3-dehydroquinate dehydratase (148 aa).

The Proton acceptor role is filled by Tyr-24. The substrate site is built by Asn-80, His-86, and Asp-93. His-106 (proton donor) is an active-site residue. Residues 107-108 (IS) and Arg-117 contribute to the substrate site.

This sequence belongs to the type-II 3-dehydroquinase family. In terms of assembly, homododecamer.

It carries out the reaction 3-dehydroquinate = 3-dehydroshikimate + H2O. It participates in metabolic intermediate biosynthesis; chorismate biosynthesis; chorismate from D-erythrose 4-phosphate and phosphoenolpyruvate: step 3/7. Catalyzes a trans-dehydration via an enolate intermediate. This Acidovorax ebreus (strain TPSY) (Diaphorobacter sp. (strain TPSY)) protein is 3-dehydroquinate dehydratase.